The following is a 58-amino-acid chain: Photosystem II reaction center protein K (58 aa).

A propeptide spanning residues 1–21 (MLNMISTFFDSSSNFSEAFLA) is cleaved from the precursor. A helical transmembrane segment spans residues 29 to 49 (IFDPIVDVMPIIPVFFLLLAF).

The protein belongs to the PsbK family. PSII is composed of 1 copy each of membrane proteins PsbA, PsbB, PsbC, PsbD, PsbE, PsbF, PsbH, PsbI, PsbJ, PsbK, PsbL, PsbM, PsbT, PsbX, PsbY, PsbZ, Psb30/Ycf12, at least 3 peripheral proteins of the oxygen-evolving complex and a large number of cofactors. It forms dimeric complexes.

Its subcellular location is the plastid. It is found in the chloroplast thylakoid membrane. In terms of biological role, one of the components of the core complex of photosystem II (PSII). PSII is a light-driven water:plastoquinone oxidoreductase that uses light energy to abstract electrons from H(2)O, generating O(2) and a proton gradient subsequently used for ATP formation. It consists of a core antenna complex that captures photons, and an electron transfer chain that converts photonic excitation into a charge separation. This chain is Photosystem II reaction center protein K, found in Chaetosphaeridium globosum (Charophycean green alga).